Consider the following 170-residue polypeptide: MHITTKRLLIREFEFKDWQAVYEYTSDSNVMKYIPEGVFTEEDAKAFVNKNKGDNAEKFPVILRDEDCLIGHIVFYKYFGEHTYEIGWVFNPNYQNKGYASEAAQAILEYGFKEMNLHRIIATCQPENIPSYRVMKKIGMRREGFFKKCIPKGNEWWDEYYYAILEEEWN.

The 160-residue stretch at Leu-8 to Glu-167 folds into the N-acetyltransferase domain.

The protein belongs to the acetyltransferase family.

This is an uncharacterized protein from Bacillus subtilis (strain 168).